A 707-amino-acid polypeptide reads, in one-letter code: E3 ubiquitin-protein ligase Praja-2 (707 aa).

A compositionally biased stretch (basic and acidic residues) spans 1 to 10 (MSQYTEKEPS). 3 disordered regions span residues 1–32 (MSQY…QTIT), 72–120 (PKEN…PSIA), and 250–314 (QNGQ…VRPK). Ser2 is subject to N-acetylserine. Composition is skewed to polar residues over residues 74–83 (ENTSGSSSLD) and 109–119 (LNQSTESSPSI). Residues 257–276 (RSSEDGVVRKRRQDDTDQGR) are compositionally biased toward basic and acidic residues. A compositionally biased stretch (polar residues) spans 293–308 (EQNTSDRANHHGSSPE). Ser306 and Ser320 each carry phosphoserine. Ser339 carries the phosphoserine; by PKA modification. Disordered stretches follow at residues 379-405 (RVTQ…QESR) and 424-493 (EDSS…QTSL). Basic and acidic residues predominate over residues 381–390 (TQRETERNRV). Residue Thr385 is modified to Phosphothreonine; by PKA. Positions 391–401 (TSENGATASGR) are enriched in polar residues. Ser430 is subject to Phosphoserine. The span at 465-481 (NDPELQSDSSGPEEENQ) shows a compositional bias: acidic residues. Positions 482-491 (ELSLQEGEQT) are enriched in polar residues. The interaction with PRKAR1A, PRKAR2A and PRKAR2B stretch occupies residues 530-707 (DGNNNLEDDS…PANDNAEEAP (178 aa)). Positions 549-569 (WSLFDGFADGLGVAEAISYVD) are mediates interaction with TBC1D31. The RING-type; atypical zinc-finger motif lies at 633-674 (CPICCSEYIKDDIATELPCHHFFHKPCVSIWLQKSGTCPVCR). The span at 685-701 (SAAASSDPDPDASPAND) shows a compositional bias: low complexity. Residues 685-707 (SAAASSDPDPDASPANDNAEEAP) form a disordered region.

In terms of assembly, binds ubiquitin-conjugating enzymes (E2s). In vitro, interacts with the ubiquitin-conjugating enzyme, UBE2D2. The phosphorylated form interacts with PRKAR1A, PRKAR2A and PRKAR2B. Binds the catalytic subunits of cAMP-dependent protein kinase. Interacts with MFHAS1. Interacts with TBC1D31; the interaction is direct and recruits PJA2 to centrosomes.

It localises to the cytoplasm. The protein localises to the cell membrane. It is found in the endoplasmic reticulum membrane. The protein resides in the golgi apparatus membrane. Its subcellular location is the synapse. It localises to the postsynaptic density. The protein localises to the cytoskeleton. It is found in the microtubule organizing center. The protein resides in the centrosome. It catalyses the reaction S-ubiquitinyl-[E2 ubiquitin-conjugating enzyme]-L-cysteine + [acceptor protein]-L-lysine = [E2 ubiquitin-conjugating enzyme]-L-cysteine + N(6)-ubiquitinyl-[acceptor protein]-L-lysine.. Its pathway is protein modification; protein ubiquitination. Functionally, has E2-dependent E3 ubiquitin-protein ligase activity. Responsible for ubiquitination of cAMP-dependent protein kinase type I and type II-alpha/beta regulatory subunits and for targeting them for proteasomal degradation. Essential for PKA-mediated long-term memory processes. Through the ubiquitination of MFHAS1, positively regulates the TLR2 signaling pathway that leads to the activation of the downstream p38 and JNK MAP kinases and promotes the polarization of macrophages toward the pro-inflammatory M1 phenotype. Plays a role in ciliogenesis by ubiquitinating OFD1. The sequence is that of E3 ubiquitin-protein ligase Praja-2 (Pja2) from Mus musculus (Mouse).